A 255-amino-acid polypeptide reads, in one-letter code: Taurine import ATP-binding protein TauB (255 aa).

Residues 2 to 229 (LQISHLYADY…RFVAGESSRS (228 aa)) form the ABC transporter domain. 34-41 (GPSGCGKT) serves as a coordination point for ATP.

The protein belongs to the ABC transporter superfamily. Taurine importer (TC 3.A.1.17.1) family. As to quaternary structure, the complex is composed of two ATP-binding proteins (TauB), two transmembrane proteins (TauC) and a solute-binding protein (TauA).

The protein resides in the cell inner membrane. The catalysed reaction is taurine(out) + ATP + H2O = taurine(in) + ADP + phosphate + H(+). Part of the ABC transporter complex TauABC involved in taurine import. Responsible for energy coupling to the transport system. This chain is Taurine import ATP-binding protein TauB, found in Shigella flexneri serotype 5b (strain 8401).